Consider the following 694-residue polypeptide: Elongation factor G (694 aa).

Residues 8–285 (EKVRNIGIAA…AVVELLPSPQ (278 aa)) enclose the tr-type G domain. Residues 17-24 (AHIDAGKT), 81-85 (DTPGH), and 135-138 (NKMD) contribute to the GTP site.

It belongs to the TRAFAC class translation factor GTPase superfamily. Classic translation factor GTPase family. EF-G/EF-2 subfamily.

It localises to the cytoplasm. Catalyzes the GTP-dependent ribosomal translocation step during translation elongation. During this step, the ribosome changes from the pre-translocational (PRE) to the post-translocational (POST) state as the newly formed A-site-bound peptidyl-tRNA and P-site-bound deacylated tRNA move to the P and E sites, respectively. Catalyzes the coordinated movement of the two tRNA molecules, the mRNA and conformational changes in the ribosome. The protein is Elongation factor G (fusA) of Synechococcus sp. (strain ATCC 27144 / PCC 6301 / SAUG 1402/1) (Anacystis nidulans).